The chain runs to 493 residues: Glutamyl-tRNA(Gln) amidotransferase subunit A (493 aa).

Active-site charge relay system residues include K79 and S159. S183 serves as the catalytic Acyl-ester intermediate.

This sequence belongs to the amidase family. GatA subfamily. In terms of assembly, heterotrimer of A, B and C subunits.

It carries out the reaction L-glutamyl-tRNA(Gln) + L-glutamine + ATP + H2O = L-glutaminyl-tRNA(Gln) + L-glutamate + ADP + phosphate + H(+). Its function is as follows. Allows the formation of correctly charged Gln-tRNA(Gln) through the transamidation of misacylated Glu-tRNA(Gln) in organisms which lack glutaminyl-tRNA synthetase. The reaction takes place in the presence of glutamine and ATP through an activated gamma-phospho-Glu-tRNA(Gln). The protein is Glutamyl-tRNA(Gln) amidotransferase subunit A of Brucella suis biovar 1 (strain 1330).